The sequence spans 313 residues: Porphobilinogen deaminase (313 aa).

C242 carries the S-(dipyrrolylmethanemethyl)cysteine modification.

It belongs to the HMBS family. Monomer. It depends on dipyrromethane as a cofactor.

It catalyses the reaction 4 porphobilinogen + H2O = hydroxymethylbilane + 4 NH4(+). It participates in porphyrin-containing compound metabolism; protoporphyrin-IX biosynthesis; coproporphyrinogen-III from 5-aminolevulinate: step 2/4. Functionally, tetrapolymerization of the monopyrrole PBG into the hydroxymethylbilane pre-uroporphyrinogen in several discrete steps. The chain is Porphobilinogen deaminase from Yersinia pseudotuberculosis serotype IB (strain PB1/+).